The sequence spans 494 residues: Cytochrome P450 2A11 (494 aa).

Position 379 is an N6-acetyllysine (Lys379). Cys439 contacts heme.

It belongs to the cytochrome P450 family. The cofactor is heme. In terms of tissue distribution, expressed in liver and lung as well as in nasal tissues.

The protein resides in the endoplasmic reticulum membrane. It localises to the microsome membrane. It carries out the reaction an organic molecule + reduced [NADPH--hemoprotein reductase] + O2 = an alcohol + oxidized [NADPH--hemoprotein reductase] + H2O + H(+). Its function is as follows. Catalyzes the oxygenation of a variety of substrates, including ethanol and procarcinogens such as N-nitrosodiethylamine and phenacetin. Has no or little activity as a coumarin 7-hydroxylase and in the formation of androstenedione from testosterone. The polypeptide is Cytochrome P450 2A11 (CYP2A11) (Oryctolagus cuniculus (Rabbit)).